We begin with the raw amino-acid sequence, 218 residues long: Adenylate kinase (218 aa).

Residue 10–15 (GAGKGT) participates in ATP binding. The segment at 30-59 (STGDMLRAAVKAGSPLGLKVKDIMTSGGLV) is NMP. AMP-binding positions include Thr-31, Arg-36, 57 to 59 (GLV), 85 to 88 (GFPR), and Gln-92. Residues 122-159 (GRRVHEASGRVYHVKHNAPKTEGVDDETGEPLVQRDDD) form an LID region. Residues Arg-123 and 132–133 (VY) each bind ATP. AMP contacts are provided by Arg-156 and Arg-167. Gly-203 contributes to the ATP binding site.

It belongs to the adenylate kinase family. In terms of assembly, monomer.

It localises to the cytoplasm. It carries out the reaction AMP + ATP = 2 ADP. It participates in purine metabolism; AMP biosynthesis via salvage pathway; AMP from ADP: step 1/1. Catalyzes the reversible transfer of the terminal phosphate group between ATP and AMP. Plays an important role in cellular energy homeostasis and in adenine nucleotide metabolism. The sequence is that of Adenylate kinase from Saccharophagus degradans (strain 2-40 / ATCC 43961 / DSM 17024).